A 525-amino-acid polypeptide reads, in one-letter code: Keratin, type I cytoskeletal 24 (525 aa).

Positions 1–30 (MSCSSRASSSRAGGSSSARVSAGGSSFSSG) are disordered. Residues 1 to 139 (MSCSSRASSS…VGDGGLFSGG (139 aa)) form a head region. The coil 1A stretch occupies residues 140-175 (EKQTMQNLNDRLANYLDKVRALEEANTDLENKIKEW). Residues 140 to 456 (EKQTMQNLND…RLLDGEGGGS (317 aa)) enclose the IF rod domain. Positions 176–198 (YDKYGPGSGDGGSGRDYSKYYSI) are linker 1. Positions 199–290 (IEDLRNQIIA…KNHEEEMKNM (92 aa)) are coil 1B. The linker 12 stretch occupies residues 291 to 313 (QGSSGGEVTVEMNAAPGTDLTKL). Positions 314–452 (LNDMRAQYEE…ETYRRLLDGE (139 aa)) are coil 2. The interval 453-525 (GGGSSFAEFG…VSSISEVKVK (73 aa)) is tail. The segment at 459–497 (AEFGGRNSGSVNMGSRDLVSGDSRSGSCSGQGRDSSKTR) is disordered. Positions 480-491 (DSRSGSCSGQGR) are enriched in polar residues.

Belongs to the intermediate filament family. As to quaternary structure, heterotetramer of two type I and two type II keratins. As to expression, highly expressed in keratinocytes, placenta, colon and spleen. Expressed at lower level in thymus and testis.

This chain is Keratin, type I cytoskeletal 24 (KRT24), found in Homo sapiens (Human).